We begin with the raw amino-acid sequence, 32 residues long: Cyclotide Hyfl-C (32 aa).

Positions 1–32 form a cross-link, cyclopeptide (Gly-Asn); sequence GSPRQCAETCFIGKCYTEELGCTCTAFLCMKN. 3 disulfides stabilise this stretch: cysteine 6/cysteine 22, cysteine 10/cysteine 24, and cysteine 15/cysteine 29.

Belongs to the cyclotide family. Moebius subfamily. In terms of processing, this is a cyclic peptide.

Probably participates in a plant defense mechanism. This Hybanthus floribundus (Greenviolet) protein is Cyclotide Hyfl-C.